The sequence spans 427 residues: G2/mitotic-specific cyclin-3 (427 aa).

The span at 1–12 (MHHNSQSLSSGH) shows a compositional bias: polar residues. Disordered stretches follow at residues 1-29 (MHHN…NLKH) and 89-126 (SVAQ…EDQE). Residues 89-105 (SVAQRKEADHNDLLTDR) are compositionally biased toward basic and acidic residues. Acidic residues predominate over residues 106-126 (EQEEPVEDDGESEEDEEEDQE).

It belongs to the cyclin family. Cyclin AB subfamily.

Essential for the control of the cell cycle at the G2/M (mitosis) transition. Interacts with the CDC2 protein kinase to form MPF. G2/M cyclins accumulate steadily during G2 and are abruptly destroyed at mitosis. This is G2/mitotic-specific cyclin-3 (CLB3) from Saccharomyces cerevisiae (strain ATCC 204508 / S288c) (Baker's yeast).